The primary structure comprises 165 residues: Transcription antitermination protein NusB (165 aa).

The disordered stretch occupies residues 1-27; that stretch reads MISDDTDQFNPRDAKSPEAAKGKSAKR. The span at 10 to 21 shows a compositional bias: basic and acidic residues; it reads NPRDAKSPEAAK.

This sequence belongs to the NusB family.

Its function is as follows. Involved in transcription antitermination. Required for transcription of ribosomal RNA (rRNA) genes. Binds specifically to the boxA antiterminator sequence of the ribosomal RNA (rrn) operons. This is Transcription antitermination protein NusB from Pseudomonas savastanoi pv. phaseolicola (strain 1448A / Race 6) (Pseudomonas syringae pv. phaseolicola (strain 1448A / Race 6)).